The primary structure comprises 343 residues: UBP1-associated proteins 1A (343 aa).

The segment at 1–61 (MAKTLDKSKK…SESDNEFDPE (61 aa)) is disordered. Positions 28–49 (NKQQQQPESSTPYSSSSSSSDS) are enriched in low complexity. Residues 50-61 (SDSESDNEFDPE) are compositionally biased toward acidic residues. An RRM domain is found at 104-181 (RKIFVYGLPW…RTATCQLASM (78 aa)). Positions 312–343 (STYPDSDAGGKRGTGKDSDAGGSSFHGYSNYS) are disordered. The span at 319-330 (AGGKRGTGKDSD) shows a compositional bias: basic and acidic residues.

In terms of assembly, interacts with UBA1A, UBA2A, UBP1A, UBP1B and UBP1C.

It localises to the nucleus. Functionally, acts as a component of a complex regulating the turnover of mRNAs in the nucleus. Binds with high affinity to RNA molecules that contain U-rich sequences in 3'-UTRs. May function in complex with UBP1 and contribute to the stabilization of mRNAs in the nucleus. However, unlike UBP1, UBA1A does not stimulate pre-mRNA splicing. This chain is UBP1-associated proteins 1A (UBA1A), found in Arabidopsis thaliana (Mouse-ear cress).